A 389-amino-acid polypeptide reads, in one-letter code: Flap endonuclease 1 (389 aa).

The tract at residues 1–105 (MGIKGLTALM…GELAKRKDKR (105 aa)) is N-domain. Aspartate 34 serves as a coordination point for Mg(2+). Residue arginine 71 coordinates DNA. 5 residues coordinate Mg(2+): aspartate 87, glutamate 159, glutamate 161, aspartate 180, and aspartate 182. The tract at residues 123–254 (EVEKLSKRTV…KTALKLIKEH (132 aa)) is I-domain. Glutamate 159 serves as a coordination point for DNA. DNA-binding residues include glycine 232 and aspartate 234. Aspartate 234 is a binding site for Mg(2+). Residues 338–346 (SQNRLESFF) form an interaction with PCNA region. The tract at residues 356–389 (IGKRKVEEKKGKNGKAGLANKKSKGVSGFRRSKN) is disordered.

The protein belongs to the XPG/RAD2 endonuclease family. FEN1 subfamily. Interacts with PCNA. Three molecules of FEN1 bind to one PCNA trimer with each molecule binding to one PCNA monomer. PCNA stimulates the nuclease activity without altering cleavage specificity. It depends on Mg(2+) as a cofactor. Post-translationally, phosphorylated. Phosphorylation upon DNA damage induces relocalization to the nuclear plasma.

It localises to the nucleus. Its subcellular location is the nucleolus. The protein resides in the nucleoplasm. The protein localises to the mitochondrion. Structure-specific nuclease with 5'-flap endonuclease and 5'-3' exonuclease activities involved in DNA replication and repair. During DNA replication, cleaves the 5'-overhanging flap structure that is generated by displacement synthesis when DNA polymerase encounters the 5'-end of a downstream Okazaki fragment. It enters the flap from the 5'-end and then tracks to cleave the flap base, leaving a nick for ligation. Also involved in the long patch base excision repair (LP-BER) pathway, by cleaving within the apurinic/apyrimidinic (AP) site-terminated flap. Acts as a genome stabilization factor that prevents flaps from equilibrating into structures that lead to duplications and deletions. Also possesses 5'-3' exonuclease activity on nicked or gapped double-stranded DNA, and exhibits RNase H activity. Also involved in replication and repair of rDNA and in repairing mitochondrial DNA. The sequence is that of Flap endonuclease 1 from Ostreococcus lucimarinus (strain CCE9901).